Consider the following 231-residue polypeptide: 2-C-methyl-D-erythritol 4-phosphate cytidylyltransferase (231 aa).

This sequence belongs to the IspD/TarI cytidylyltransferase family. IspD subfamily.

The enzyme catalyses 2-C-methyl-D-erythritol 4-phosphate + CTP + H(+) = 4-CDP-2-C-methyl-D-erythritol + diphosphate. It functions in the pathway isoprenoid biosynthesis; isopentenyl diphosphate biosynthesis via DXP pathway; isopentenyl diphosphate from 1-deoxy-D-xylulose 5-phosphate: step 2/6. Catalyzes the formation of 4-diphosphocytidyl-2-C-methyl-D-erythritol from CTP and 2-C-methyl-D-erythritol 4-phosphate (MEP). This is 2-C-methyl-D-erythritol 4-phosphate cytidylyltransferase from Fusobacterium nucleatum subsp. nucleatum (strain ATCC 25586 / DSM 15643 / BCRC 10681 / CIP 101130 / JCM 8532 / KCTC 2640 / LMG 13131 / VPI 4355).